Reading from the N-terminus, the 507-residue chain is Probable cytosol aminopeptidase (507 aa).

Positions 271 and 276 each coordinate Mn(2+). Residue Lys283 is part of the active site. Mn(2+)-binding residues include Asp294, Asp353, and Glu355. Arg357 is an active-site residue.

It belongs to the peptidase M17 family. Mn(2+) is required as a cofactor.

It localises to the cytoplasm. It catalyses the reaction Release of an N-terminal amino acid, Xaa-|-Yaa-, in which Xaa is preferably Leu, but may be other amino acids including Pro although not Arg or Lys, and Yaa may be Pro. Amino acid amides and methyl esters are also readily hydrolyzed, but rates on arylamides are exceedingly low.. The catalysed reaction is Release of an N-terminal amino acid, preferentially leucine, but not glutamic or aspartic acids.. Its function is as follows. Presumably involved in the processing and regular turnover of intracellular proteins. Catalyzes the removal of unsubstituted N-terminal amino acids from various peptides. The chain is Probable cytosol aminopeptidase from Nitratidesulfovibrio vulgaris (strain ATCC 29579 / DSM 644 / CCUG 34227 / NCIMB 8303 / VKM B-1760 / Hildenborough) (Desulfovibrio vulgaris).